The primary structure comprises 367 residues: Glutamate 5-kinase (367 aa).

ATP is bound at residue lysine 10. Substrate-binding residues include aspartate 137 and asparagine 149. Residues 169–170 (TD) and 211–217 (TGGMATK) contribute to the ATP site. The region spanning 275 to 353 (AGEITVDDGA…QQISEILGYE (79 aa)) is the PUA domain.

Belongs to the glutamate 5-kinase family.

The protein localises to the cytoplasm. The catalysed reaction is L-glutamate + ATP = L-glutamyl 5-phosphate + ADP. The protein operates within amino-acid biosynthesis; L-proline biosynthesis; L-glutamate 5-semialdehyde from L-glutamate: step 1/2. In terms of biological role, catalyzes the transfer of a phosphate group to glutamate to form L-glutamate 5-phosphate. This is Glutamate 5-kinase from Yersinia pestis bv. Antiqua (strain Antiqua).